Here is a 288-residue protein sequence, read N- to C-terminus: MALFKKKNYIRINPNRAHANDASKKPSVPDNMWAKCPSCKRTLYTKEMGAEKICPHCGYSFRIGAWERLAITVDEKSFHNWDSELVTKDPLNFPGYLEKIEKMQEKTGLDEAVLTGEATIEGQAVAIGIMDANFIMGSMGTIVGEKITRLFERATEKHLPVVIFTASGGARMQEGIFSLMQMAKISAALQRHNKAGLLYLTVLTDPTTGGVTASFAMDGDIILAEPQSLIGFAGRRVIEQTIRQELPDDFQKAEFLLEHGFVDQIVPRNLLRQRLSDLLRLHSLEGWR.

One can recognise a CoA carboxyltransferase N-terminal domain in the interval 32–288 (MWAKCPSCKR…LRLHSLEGWR (257 aa)). 4 residues coordinate Zn(2+): C36, C39, C54, and C57. Residues 36 to 57 (CPSCKRTLYTKEMGAEKICPHC) form a C4-type zinc finger.

The protein belongs to the AccD/PCCB family. Acetyl-CoA carboxylase is a heterohexamer composed of biotin carboxyl carrier protein (AccB), biotin carboxylase (AccC) and two subunits each of ACCase subunit alpha (AccA) and ACCase subunit beta (AccD). The cofactor is Zn(2+).

Its subcellular location is the cytoplasm. It catalyses the reaction N(6)-carboxybiotinyl-L-lysyl-[protein] + acetyl-CoA = N(6)-biotinyl-L-lysyl-[protein] + malonyl-CoA. Its pathway is lipid metabolism; malonyl-CoA biosynthesis; malonyl-CoA from acetyl-CoA: step 1/1. Its function is as follows. Component of the acetyl coenzyme A carboxylase (ACC) complex. Biotin carboxylase (BC) catalyzes the carboxylation of biotin on its carrier protein (BCCP) and then the CO(2) group is transferred by the transcarboxylase to acetyl-CoA to form malonyl-CoA. The polypeptide is Acetyl-coenzyme A carboxylase carboxyl transferase subunit beta (Enterococcus faecalis (strain ATCC 700802 / V583)).